Here is a 357-residue protein sequence, read N- to C-terminus: UPF0283 membrane protein HS_0596 (357 aa).

A run of 3 helical transmembrane segments spans residues 67 to 87, 96 to 116, and 213 to 233; these read LMATICLFSCGILAQSVQWLV, IAFVFAMVSLFLVLLGLGAII, and AVESALIVAVSPLAIVDMFFI.

It belongs to the UPF0283 family.

The protein resides in the cell inner membrane. This chain is UPF0283 membrane protein HS_0596, found in Histophilus somni (strain 129Pt) (Haemophilus somnus).